We begin with the raw amino-acid sequence, 182 residues long: Large ribosomal subunit protein uL5 (182 aa).

Belongs to the universal ribosomal protein uL5 family. As to quaternary structure, part of the 50S ribosomal subunit; part of the 5S rRNA/L5/L18/L25 subcomplex. Contacts the 5S rRNA and the P site tRNA. Forms a bridge to the 30S subunit in the 70S ribosome.

Its function is as follows. This is one of the proteins that bind and probably mediate the attachment of the 5S RNA into the large ribosomal subunit, where it forms part of the central protuberance. In the 70S ribosome it contacts protein S13 of the 30S subunit (bridge B1b), connecting the 2 subunits; this bridge is implicated in subunit movement. Contacts the P site tRNA; the 5S rRNA and some of its associated proteins might help stabilize positioning of ribosome-bound tRNAs. This Borreliella afzelii (strain PKo) (Borrelia afzelii) protein is Large ribosomal subunit protein uL5.